Reading from the N-terminus, the 354-residue chain is Trans-L-3-hydroxyproline dehydratase (354 aa).

Catalysis depends on C104, which acts as the Proton acceptor. Substrate-binding positions include 105–106, D269, and 274–275; these read GH and GS.

This sequence belongs to the proline racemase family. As to quaternary structure, homodimer.

The catalysed reaction is trans-3-hydroxy-L-proline = 1-pyrroline-2-carboxylate + H2O. Catalyzes the dehydration of trans-3-hydroxy-L-proline to Delta(1)-pyrroline-2-carboxylate (Pyr2C). This is Trans-L-3-hydroxyproline dehydratase (L3HYPDH) from Bos taurus (Bovine).